Consider the following 383-residue polypeptide: Acetylornithine deacetylase (383 aa).

His80 provides a ligand contact to Zn(2+). Asp82 is a catalytic residue. Asp112 serves as a coordination point for Zn(2+). Glu144 is a catalytic residue. The Zn(2+) site is built by Glu145, Glu169, and His355.

It belongs to the peptidase M20A family. ArgE subfamily. Homodimer. Zn(2+) serves as cofactor. Requires Co(2+) as cofactor. It depends on glutathione as a cofactor.

Its subcellular location is the cytoplasm. The enzyme catalyses N(2)-acetyl-L-ornithine + H2O = L-ornithine + acetate. It participates in amino-acid biosynthesis; L-arginine biosynthesis; L-ornithine from N(2)-acetyl-L-ornithine (linear): step 1/1. In terms of biological role, catalyzes the hydrolysis of the amide bond of N(2)-acetylated L-amino acids. Cleaves the acetyl group from N-acetyl-L-ornithine to form L-ornithine, an intermediate in L-arginine biosynthesis pathway, and a branchpoint in the synthesis of polyamines. This Pectobacterium carotovorum subsp. carotovorum (strain PC1) protein is Acetylornithine deacetylase.